We begin with the raw amino-acid sequence, 265 residues long: Glutamate racemase (265 aa).

Residues 12–13 (DS) and 44–45 (YG) contribute to the substrate site. C75 (proton donor/acceptor) is an active-site residue. 76 to 77 (NT) is a substrate binding site. Residue C186 is the Proton donor/acceptor of the active site. Position 187-188 (187-188 (TH)) interacts with substrate.

The protein belongs to the aspartate/glutamate racemases family.

The enzyme catalyses L-glutamate = D-glutamate. It participates in cell wall biogenesis; peptidoglycan biosynthesis. In terms of biological role, provides the (R)-glutamate required for cell wall biosynthesis. In Pseudomonas putida (strain ATCC 700007 / DSM 6899 / JCM 31910 / BCRC 17059 / LMG 24140 / F1), this protein is Glutamate racemase.